A 292-amino-acid polypeptide reads, in one-letter code: 33 kDa chaperonin (292 aa).

Intrachain disulfides connect cysteine 230-cysteine 232 and cysteine 263-cysteine 266.

It belongs to the HSP33 family. In terms of processing, under oxidizing conditions two disulfide bonds are formed involving the reactive cysteines. Under reducing conditions zinc is bound to the reactive cysteines and the protein is inactive.

It is found in the cytoplasm. Its function is as follows. Redox regulated molecular chaperone. Protects both thermally unfolding and oxidatively damaged proteins from irreversible aggregation. Plays an important role in the bacterial defense system toward oxidative stress. In Salmonella choleraesuis (strain SC-B67), this protein is 33 kDa chaperonin.